Consider the following 1462-residue polypeptide: Tyrosine-protein phosphatase 69D (1462 aa).

Positions 1-28 are cleaved as a signal peptide; the sequence is MALLYRRMSMLLNIILAYIFLCAICVQG. Ig-like C2-type domains are found at residues 29–125 and 131–230; these read SVKQ…TEFQ and PSKV…KEIT. Residues 29–805 are Extracellular-facing; it reads SVKQEWAEIG…MDYYLSIGVK (777 aa). Residues asparagine 40, asparagine 58, asparagine 64, asparagine 85, asparagine 109, asparagine 119, asparagine 162, asparagine 191, asparagine 196, asparagine 209, asparagine 255, asparagine 288, asparagine 302, asparagine 429, asparagine 442, asparagine 451, asparagine 516, asparagine 613, asparagine 701, and asparagine 755 are each glycosylated (N-linked (GlcNAc...) asparagine). Cysteines 45 and 112 form a disulfide. Cysteine 154 and cysteine 214 are joined by a disulfide. 3 Fibronectin type-III domains span residues 237–332, 334–435, and 439–547; these read PQVS…TLSY, PIFI…TMDG, and KPTN…TPDA. The chain crosses the membrane as a helical span at residues 806–823; sequence AGAVLLGVILVFIVLWVF. Residues 824 to 1462 are Cytoplasmic-facing; the sequence is HHKKTKNELQ…LHHIAESTLD (639 aa). 2 consecutive Tyrosine-protein phosphatase domains span residues 893 to 1156 and 1187 to 1450; these read FLRE…LLDT and LEVE…IINY. Active-site phosphocysteine intermediate residues include cysteine 1097 and cysteine 1391.

This sequence belongs to the protein-tyrosine phosphatase family. Receptor class subfamily.

It localises to the membrane. The catalysed reaction is O-phospho-L-tyrosyl-[protein] + H2O = L-tyrosyl-[protein] + phosphate. In terms of biological role, possible cell adhesion receptor. The chain is Tyrosine-protein phosphatase 69D (Ptp69D) from Drosophila melanogaster (Fruit fly).